Reading from the N-terminus, the 653-residue chain is Macrolide export ATP-binding/permease protein MacB (653 aa).

Residues 6–244 (LQLTRVTRRF…DAASGASGDA (239 aa)) form the ABC transporter domain. Position 42-49 (42-49 (GASGSGKS)) interacts with ATP. The next 4 membrane-spanning stretches (helical) occupy residues 278–298 (LLTM…VAIG), 526–546 (LTLL…IGVM), 587–607 (MGGA…SLFV), and 616–636 (AGSI…FGFM).

It belongs to the ABC transporter superfamily. Macrolide exporter (TC 3.A.1.122) family. As to quaternary structure, homodimer.

The protein localises to the cell inner membrane. Non-canonical ABC transporter that contains transmembrane domains (TMD), which form a pore in the inner membrane, and an ATP-binding domain (NBD), which is responsible for energy generation. Confers resistance against macrolides. This is Macrolide export ATP-binding/permease protein MacB from Burkholderia thailandensis (strain ATCC 700388 / DSM 13276 / CCUG 48851 / CIP 106301 / E264).